A 370-amino-acid chain; its full sequence is MNERTSDAFDALLVLSFGGPEGHEEVRPFLENVTRGRGIPPERLDDVAVHYHHFGGISPINALNREIIANVEKELASRNRELPVYFGNRNWKPFGNEAAEQMADDGVKNALVLATSAWGGYSGCQQYQEDIRGMIKHLESQGQSVTFTKLRQFYDHPRFVSTMAQLVQDSYAKLPDELRDEARLVFTAHSIPLAADNAAGTPQDGSLYSSQVKEASALIAKAVGVSDFDVVWQSRSGSPHTPWLEPDIVDHAVELNEKGQKALVVCPVGFISDHMEVIWDLDSELMEEAEKRNMVVERVATVGPTDEFAALVVDLIEEAELKRVIERLGKLPARGSSINGAPCSEGCCGTAKHQTARVNPNARSAAPAAN.

2 residues coordinate Fe-coproporphyrin III: S58 and Y127. Fe(2+) is bound by residues H189 and E276.

The protein belongs to the ferrochelatase family.

The protein resides in the cytoplasm. It catalyses the reaction Fe-coproporphyrin III + 2 H(+) = coproporphyrin III + Fe(2+). Its pathway is porphyrin-containing compound metabolism; protoheme biosynthesis. In terms of biological role, involved in coproporphyrin-dependent heme b biosynthesis. Catalyzes the insertion of ferrous iron into coproporphyrin III to form Fe-coproporphyrin III. The sequence is that of Coproporphyrin III ferrochelatase from Corynebacterium glutamicum (strain R).